The primary structure comprises 256 residues: Isoprenyl transferase (256 aa).

Positions 1-22 are disordered; it reads MLEKFSKWKGNRSNHTTPSHSL. Residue D36 is part of the active site. A Mg(2+)-binding site is contributed by D36. Residues 37–40, W41, R49, H53, and 81–83 contribute to the substrate site; these read GNGR and STE. N84 functions as the Proton acceptor in the catalytic mechanism. Substrate contacts are provided by residues W85, R87, R204, and 210-212; that span reads RLS. E223 lines the Mg(2+) pocket.

This sequence belongs to the UPP synthase family. Homodimer. Requires Mg(2+) as cofactor.

Catalyzes the condensation of isopentenyl diphosphate (IPP) with allylic pyrophosphates generating different type of terpenoids. The protein is Isoprenyl transferase of Halalkalibacterium halodurans (strain ATCC BAA-125 / DSM 18197 / FERM 7344 / JCM 9153 / C-125) (Bacillus halodurans).